The following is a 261-amino-acid chain: Carnitinyl-CoA dehydratase (261 aa).

The active-site Nucleophile is E111. E131 functions as the Proton acceptor in the catalytic mechanism.

Belongs to the enoyl-CoA hydratase/isomerase family.

It carries out the reaction (R)-carnitinyl-CoA = crotonobetainyl-CoA + H2O. It functions in the pathway amine and polyamine metabolism; carnitine metabolism. Its function is as follows. Catalyzes the reversible dehydration of L-carnitinyl-CoA to crotonobetainyl-CoA. The protein is Carnitinyl-CoA dehydratase of Proteus mirabilis (strain HI4320).